Here is a 213-residue protein sequence, read N- to C-terminus: MGNRAEEDYNFVFKVVLIGESGVGKTNLLSRFTRNEFSHDSRTTIGVEFSTRTVMLGTAAIKAQIWDTAGLERYRAITSAYYRGAVGALLVFDLTKHQTYAVVERWLKELYDHAEATIVVMLVGNKSDLSQSREVPTEEARMFAENNGLLFLETSALDSTNVELAFETVLKEIFAKVSKQRQNNARTNAVTLGSGPAGQELGPGEKRACCISL.

Residues serine 21, glycine 24, lysine 25, threonine 26, asparagine 27, serine 38, histidine 39, threonine 43, and threonine 44 each contribute to the GTP site. Position 26 (threonine 26) interacts with Mg(2+). 2 short sequence motifs (switch) span residues 35–49 (NEFSHDSRTTIGVEF) and 67–84 (DTAGLERYRAITSAYYRG). Positions 44 and 67 each coordinate Mg(2+). Glycine 70, asparagine 125, lysine 126, aspartate 128, alanine 156, and leucine 157 together coordinate GTP. 2 S-geranylgeranyl cysteine lipidation sites follow: cysteine 209 and cysteine 210. At cysteine 210 the chain carries Cysteine methyl ester. Positions 211–213 (ISL) are cleaved as a propeptide — removed in mature form.

Belongs to the small GTPase superfamily. Rab family. Interacts (GTP-bound form) with RAB11FIP1, RAB11FIP2, RAB11FIP3 and RAB11FIP4. Interacts (via the hypervariable C-terminal region) with ITGB1 (via the cytoplasmic region); the interaction is GTP-dependent. Interacts with ITGAV. Associates with the integrin alpha-V/beta-1 heterodimer. Interacts with VPS33B. Mg(2+) serves as cofactor.

The protein localises to the cell membrane. It is found in the cell projection. The protein resides in the pseudopodium membrane. Its subcellular location is the cytoplasmic vesicle. The enzyme catalyses GTP + H2O = GDP + phosphate + H(+). With respect to regulation, regulated by guanine nucleotide exchange factors (GEFs) which promote the exchange of bound GDP for free GTP. Regulated by GTPase activating proteins (GAPs) which increase the GTP hydrolysis activity. Inhibited by GDP dissociation inhibitors (GDIs) which prevent Rab-GDP dissociation. Functionally, the small GTPases Rab are key regulators of intracellular membrane trafficking, from the formation of transport vesicles to their fusion with membranes. Rabs cycle between an inactive GDP-bound form and an active GTP-bound form that is able to recruit to membranes different set of downstream effectors directly responsible for vesicle formation, movement, tethering and fusion. RAB25 regulates epithelial cell differentiation, proliferation and survival, thereby playing key roles in tumorigenesis. Promotes invasive migration of cells in which it functions to localize and maintain integrin alpha-V/beta-1 at the tips of extending pseudopodia. Involved in the regulation of epithelial morphogenesis through the control of CLDN4 expression and localization at tight junctions. May selectively regulate the apical recycling pathway. Together with MYO5B regulates transcytosis. This Bos taurus (Bovine) protein is Ras-related protein Rab-25 (RAB25).